The primary structure comprises 428 residues: CinA-like protein (428 aa).

Belongs to the CinA family.

The polypeptide is CinA-like protein (Gemmatimonas aurantiaca (strain DSM 14586 / JCM 11422 / NBRC 100505 / T-27)).